Reading from the N-terminus, the 334-residue chain is Protein translocase subunit SecF (334 aa).

Helical transmembrane passes span 18-38 (VAAG…AVTG), 144-164 (GAAM…AIRF), 168-190 (FGLA…IKIF), 195-217 (SLTV…IIIF), 258-278 (ATLA…WVMA), and 279-299 (FGVV…LLWI).

This sequence belongs to the SecD/SecF family. SecF subfamily. As to quaternary structure, forms a complex with SecD. Part of the essential Sec protein translocation apparatus which comprises SecA, SecYEG and auxiliary proteins SecDF. Other proteins may also be involved.

Its subcellular location is the cell inner membrane. Part of the Sec protein translocase complex. Interacts with the SecYEG preprotein conducting channel. SecDF uses the proton motive force (PMF) to complete protein translocation after the ATP-dependent function of SecA. This Gemmatimonas aurantiaca (strain DSM 14586 / JCM 11422 / NBRC 100505 / T-27) protein is Protein translocase subunit SecF.